The chain runs to 457 residues: Exodeoxyribonuclease 7 large subunit (457 aa).

Belongs to the XseA family. Heterooligomer composed of large and small subunits.

It is found in the cytoplasm. The enzyme catalyses Exonucleolytic cleavage in either 5'- to 3'- or 3'- to 5'-direction to yield nucleoside 5'-phosphates.. Bidirectionally degrades single-stranded DNA into large acid-insoluble oligonucleotides, which are then degraded further into small acid-soluble oligonucleotides. The chain is Exodeoxyribonuclease 7 large subunit from Cronobacter sakazakii (strain ATCC BAA-894) (Enterobacter sakazakii).